The sequence spans 155 residues: Large ribosomal subunit protein uL22c (155 aa).

It belongs to the universal ribosomal protein uL22 family. In terms of assembly, part of the 50S ribosomal subunit.

It localises to the plastid. The protein localises to the chloroplast. Its function is as follows. This protein binds specifically to 23S rRNA. Functionally, the globular domain of the protein is located near the polypeptide exit tunnel on the outside of the subunit, while an extended beta-hairpin is found that lines the wall of the exit tunnel in the center of the 70S ribosome. This is Large ribosomal subunit protein uL22c (rpl22) from Nicotiana tomentosiformis (Tobacco).